The sequence spans 884 residues: DNA mismatch repair protein MutS (884 aa).

601-608 (GPNMSGKS) is a binding site for ATP. Residues 826 to 845 (ESQLSFFGGEQSSKKQDKPL) are disordered.

It belongs to the DNA mismatch repair MutS family.

This protein is involved in the repair of mismatches in DNA. It is possible that it carries out the mismatch recognition step. This protein has a weak ATPase activity. The chain is DNA mismatch repair protein MutS from Bacillus cereus (strain ATCC 14579 / DSM 31 / CCUG 7414 / JCM 2152 / NBRC 15305 / NCIMB 9373 / NCTC 2599 / NRRL B-3711).